Reading from the N-terminus, the 522-residue chain is Bifunctional purine biosynthesis protein PurH (522 aa).

One can recognise an MGS-like domain in the interval 1–143 (MIRRALISVS…KNHARVAVVV (143 aa)).

The protein belongs to the PurH family.

The catalysed reaction is (6R)-10-formyltetrahydrofolate + 5-amino-1-(5-phospho-beta-D-ribosyl)imidazole-4-carboxamide = 5-formamido-1-(5-phospho-D-ribosyl)imidazole-4-carboxamide + (6S)-5,6,7,8-tetrahydrofolate. It catalyses the reaction IMP + H2O = 5-formamido-1-(5-phospho-D-ribosyl)imidazole-4-carboxamide. It functions in the pathway purine metabolism; IMP biosynthesis via de novo pathway; 5-formamido-1-(5-phospho-D-ribosyl)imidazole-4-carboxamide from 5-amino-1-(5-phospho-D-ribosyl)imidazole-4-carboxamide (10-formyl THF route): step 1/1. Its pathway is purine metabolism; IMP biosynthesis via de novo pathway; IMP from 5-formamido-1-(5-phospho-D-ribosyl)imidazole-4-carboxamide: step 1/1. This Sorangium cellulosum (strain So ce56) (Polyangium cellulosum (strain So ce56)) protein is Bifunctional purine biosynthesis protein PurH.